The chain runs to 264 residues: COP9 signalosome complex subunit 7b (264 aa).

The residue at position 2 (alanine 2) is an N-acetylalanine. The 158-residue stretch at 2-159 (AGEQKPSSNL…QLLEVDFCIG (158 aa)) folds into the PCI domain. Residues 188–237 (IEQQVLRANQYKENHNRTQQQVEAEVTNIKKTLKATASSSAQEMEQQLAE) adopt a coiled-coil conformation. Polar residues predominate over residues 223-232 (TASSSAQEME). A disordered region spans residues 223-264 (TASSSAQEMEQQLAERECPPHAEQRQPTKKMSKVKGLVSSRH). Basic and acidic residues predominate over residues 235 to 248 (LAERECPPHAEQRQ). At serine 261 the chain carries Phosphothreonine. Residue arginine 263 is modified to Phosphoserine.

It belongs to the CSN7/EIF3M family. CSN7 subfamily. In terms of assembly, component of the CSN complex, composed of COPS1/GPS1, COPS2, COPS3, COPS4, COPS5, COPS6, COPS7 (COPS7A or COPS7B), COPS8 and COPS9 isoform 1. In the complex, it probably interacts directly with COPS1, COPS2, COPS4, COPS5, COPS6 and COPS8. Interacts with EIF3S6. (Microbial infection) Interacts with vaccinia virus protein C9L.

The protein localises to the cytoplasm. Its subcellular location is the nucleus. Component of the COP9 signalosome complex (CSN), a complex involved in various cellular and developmental processes. The CSN complex is an essential regulator of the ubiquitin (Ubl) conjugation pathway by mediating the deneddylation of the cullin subunits of SCF-type E3 ligase complexes, leading to decrease the Ubl ligase activity of SCF-type complexes such as SCF, CSA or DDB2. The complex is also involved in phosphorylation of p53/TP53, JUN, I-kappa-B-alpha/NFKBIA, ITPK1 and IRF8/ICSBP, possibly via its association with CK2 and PKD kinases. CSN-dependent phosphorylation of TP53 and JUN promotes and protects degradation by the Ubl system, respectively. This Homo sapiens (Human) protein is COP9 signalosome complex subunit 7b (COPS7B).